The following is a 202-amino-acid chain: MELWGPCVLLCLFSLLTQVTAETPTPKAKKAANAKKDAVSPKMLEELKTQLDSLAQEVALLKEQQALQTVCLKGTKVHMKCFLAFVQAKTFHEASEDCISRGGTLGTPQTGSENDALYEYLRQSVGSEAEVWLGFNDMASEGSWVDMTGGHIAYKNWETEITAQPDGGKVENCATLSGAANGKWFDKRCRDKLPYVCQFAIV.

The first 21 residues, 1-21 (MELWGPCVLLCLFSLLTQVTA), serve as a signal peptide directing secretion. 3 disulfide bridges follow: Cys71/Cys81, Cys98/Cys197, and Cys173/Cys189. A C-type lectin domain is found at 77 to 198 (VHMKCFLAFV…CRDKLPYVCQ (122 aa)).

Homotrimer.

The protein resides in the secreted. Its function is as follows. Tetranectin binds to plasminogen and to isolated kringle 4. May be involved in the packaging of molecules destined for exocytosis. Plays a role in retinal function. This is Tetranectin (CLEC3B) from Bos taurus (Bovine).